The following is a 64-amino-acid chain: Toxin Tce3 (64 aa).

The 62-residue stretch at 1-62 (KDGYIIEHRG…IFDSNNNKCS (62 aa)) folds into the LCN-type CS-alpha/beta domain. Intrachain disulfides connect C11-C61, C15-C37, C23-C42, and C27-C44.

This sequence belongs to the long (4 C-C) scorpion toxin superfamily. Sodium channel inhibitor family. Beta subfamily. In terms of tissue distribution, expressed by the venom gland.

The protein resides in the secreted. In terms of biological role, inhibits the sodium (Nav) currents in an apparent irreversible manner. Produces small depolarization and induces repetitive firing in squid axons. Is specific for arthropods (crickets, triatomides, crabs and squids), but is non-toxic to mice. Shows antibacterial activity against both Gram-positive and Gram-negative bacteria. This chain is Toxin Tce3, found in Tityus cerroazul (Scorpion).